Consider the following 305-residue polypeptide: Ribonucleoside-diphosphate reductase small subunit (305 aa).

Fe cation is bound by residues Glu64, Glu94, and His97. Tyr101 is an active-site residue. The helical transmembrane segment at Val150–Thr170 threads the bilayer. Fe cation-binding residues include Glu157, Glu191, and His194.

This sequence belongs to the ribonucleoside diphosphate reductase small chain family. Heterotetramer composed of a homodimer of the large subunit (R1) and a homodimer of the small subunit (R2). Larger multisubunit protein complex are also active, composed of (R1)n(R2)n. Requires Fe cation as cofactor.

It localises to the host membrane. It catalyses the reaction a 2'-deoxyribonucleoside 5'-diphosphate + [thioredoxin]-disulfide + H2O = a ribonucleoside 5'-diphosphate + [thioredoxin]-dithiol. In terms of biological role, ribonucleoside-diphosphate reductase holoenzyme provides the precursors necessary for viral DNA synthesis. Allows virus growth in non-dividing cells, as well as reactivation from latency in infected hosts. Catalyzes the biosynthesis of deoxyribonucleotides from the corresponding ribonucleotides. The chain is Ribonucleoside-diphosphate reductase small subunit from Equus caballus (Horse).